We begin with the raw amino-acid sequence, 98 residues long: NADH-ubiquinone oxidoreductase chain 4L (98 aa).

The next 3 helical transmembrane spans lie at 1 to 21, 29 to 49, and 61 to 81; these read MSMVYINIFLAFIMSLMGLLM, SLLCLEGMMLSLFIMMAVAIL, and IILLVFAACEAALGLSLLVMV.

Belongs to the complex I subunit 4L family. Core subunit of respiratory chain NADH dehydrogenase (Complex I) which is composed of 45 different subunits.

It localises to the mitochondrion inner membrane. The catalysed reaction is a ubiquinone + NADH + 5 H(+)(in) = a ubiquinol + NAD(+) + 4 H(+)(out). Its function is as follows. Core subunit of the mitochondrial membrane respiratory chain NADH dehydrogenase (Complex I) which catalyzes electron transfer from NADH through the respiratory chain, using ubiquinone as an electron acceptor. Part of the enzyme membrane arm which is embedded in the lipid bilayer and involved in proton translocation. The chain is NADH-ubiquinone oxidoreductase chain 4L (MT-ND4L) from Felis catus (Cat).